Consider the following 172-residue polypeptide: Zinc finger C2HC domain-containing protein 1B (172 aa).

2 consecutive C2HC/C3H-type zinc fingers follow at residues 14-43 (KLFP…VFNK) and 117-146 (DYIQ…QTSR). C18, C21, H33, C37, C121, C124, H136, and C140 together coordinate Zn(2+).

Belongs to the ZC2HC1 family. The cofactor is Zn(2+).

This is Zinc finger C2HC domain-containing protein 1B (Zc2hc1b) from Mus musculus (Mouse).